The primary structure comprises 379 residues: Anhydro-N-acetylmuramic acid kinase (379 aa).

9-16 contacts ATP; it reads GTSADGVD.

This sequence belongs to the anhydro-N-acetylmuramic acid kinase family.

It carries out the reaction 1,6-anhydro-N-acetyl-beta-muramate + ATP + H2O = N-acetyl-D-muramate 6-phosphate + ADP + H(+). It participates in amino-sugar metabolism; 1,6-anhydro-N-acetylmuramate degradation. It functions in the pathway cell wall biogenesis; peptidoglycan recycling. Its function is as follows. Catalyzes the specific phosphorylation of 1,6-anhydro-N-acetylmuramic acid (anhMurNAc) with the simultaneous cleavage of the 1,6-anhydro ring, generating MurNAc-6-P. Is required for the utilization of anhMurNAc either imported from the medium or derived from its own cell wall murein, and thus plays a role in cell wall recycling. In Parasynechococcus marenigrum (strain WH8102), this protein is Anhydro-N-acetylmuramic acid kinase.